The primary structure comprises 403 residues: Putative queuine tRNA-ribosyltransferase (403 aa).

Catalysis depends on Asp91, which acts as the Proton acceptor. Substrate contacts are provided by residues 91 to 95 (DSGGF), Asp177, Gln218, and Gly245. Residues 275–281 (GIGAIED) form an RNA binding region. Asp294 acts as the Nucleophile in catalysis. The RNA binding; important for wobble base 34 recognition stretch occupies residues 299–303 (ARWAR). Residues Cys341, Cys343, Cys346, and His372 each coordinate Zn(2+).

Belongs to the queuine tRNA-ribosyltransferase family. Homodimer. Within each dimer, one monomer is responsible for RNA recognition and catalysis, while the other monomer binds to the replacement base PreQ1. Zn(2+) serves as cofactor.

The enzyme catalyses 7-aminomethyl-7-carbaguanine + guanosine(34) in tRNA = 7-aminomethyl-7-carbaguanosine(34) in tRNA + guanine. Functionally, catalyzes the base-exchange of a guanine (G) residue with the queuine precursor 7-aminomethyl-7-deazaguanine (PreQ1) at position 34 (anticodon wobble position) in tRNAs with GU(N) anticodons (tRNA-Asp, -Asn, -His and -Tyr). Catalysis occurs through a double-displacement mechanism. The nucleophile active site attacks the C1' of nucleotide 34 to detach the guanine base from the RNA, forming a covalent enzyme-RNA intermediate. The proton acceptor active site deprotonates the incoming PreQ1, allowing a nucleophilic attack on the C1' of the ribose to form the product. After dissociation, two additional enzymatic reactions on the tRNA convert PreQ1 to queuine (Q), resulting in the hypermodified nucleoside queuosine (7-(((4,5-cis-dihydroxy-2-cyclopenten-1-yl)amino)methyl)-7-deazaguanosine). This is Putative queuine tRNA-ribosyltransferase from Archaeoglobus fulgidus (strain ATCC 49558 / DSM 4304 / JCM 9628 / NBRC 100126 / VC-16).